A 253-amino-acid chain; its full sequence is Chloride intracellular channel protein 4 (253 aa).

The residue at position 2 (Ala-2) is an N-acetylalanine. Positions 2–101 are required for insertion into the membrane; sequence ALSMPLNGLK…EEFLEEVLCP (100 aa). Ser-4 carries the post-translational modification Phosphoserine. Lys-24 is modified (N6-acetyllysine). Positions 35 to 38 match the G-site motif; the sequence is CPFS. The chain crosses the membrane as a helical span at residues 37-57; it reads FSQRLFMILWLKGVVFSVTTV. Residues 81 to 244 form the GST C-terminal domain; the sequence is NSEVKTDVNK…PSDKEVEIAY (164 aa). Lys-130 bears the N6-acetyllysine mark. Phosphoserine is present on residues Ser-132, Ser-167, and Ser-236. Position 244 is a phosphotyrosine (Tyr-244).

This sequence belongs to the chloride channel CLIC family. Component of a multimeric complex consisting of several cytoskeletal proteins, including actin, ezrin, alpha-actinin, gelsolin, IQGAP1 and CLIC5A. Binds directly to brain dynamin I in a complex containing actin, tubulin and 14-3-3 isoforms. Monomer. Interacts with HRH3. Interacts with AKAP9. As to expression, detected in epithelial cells from colon, esophagus and kidney (at protein level). Expression is prominent in heart, kidney, placenta and skeletal muscle.

The protein localises to the cytoplasm. It is found in the cytoskeleton. It localises to the microtubule organizing center. Its subcellular location is the centrosome. The protein resides in the cytoplasmic vesicle membrane. The protein localises to the nucleus. It is found in the cell membrane. It localises to the mitochondrion. Its subcellular location is the cell junction. The protein resides in the endoplasmic reticulum membrane. The catalysed reaction is chloride(in) = chloride(out). The enzyme catalyses thiocyanate(in) = thiocyanate(out). It catalyses the reaction nitrate(in) = nitrate(out). It carries out the reaction iodide(out) = iodide(in). The catalysed reaction is bromide(in) = bromide(out). The enzyme catalyses fluoride(in) = fluoride(out). It catalyses the reaction choline(out) = choline(in). Its activity is regulated as follows. Inhibited by rapamycin, amphotericin B and IAA-94. In the soluble state, catalyzes glutaredoxin-like thiol disulfide exchange reactions with reduced glutathione as electron donor. Can insert into membranes and form voltage-dependent multi-ion conductive channels. Membrane insertion seems to be redox-regulated and may occur only under oxidizing conditions. Has alternate cellular functions like a potential role in angiogenesis or in maintaining apical-basolateral membrane polarity during mitosis and cytokinesis. Could also promote endothelial cell proliferation and regulate endothelial morphogenesis (tubulogenesis). Promotes cell-surface expression of HRH3. This Homo sapiens (Human) protein is Chloride intracellular channel protein 4.